The primary structure comprises 88 residues: Small ribosomal subunit protein bS20 (88 aa).

Residues 1 to 25 (MANSAQARKRVRQNNTRRQHAASQR) are disordered. The segment covering 7 to 20 (ARKRVRQNNTRRQH) has biased composition (basic residues).

This sequence belongs to the bacterial ribosomal protein bS20 family.

Binds directly to 16S ribosomal RNA. The polypeptide is Small ribosomal subunit protein bS20 (Psychrobacter sp. (strain PRwf-1)).